A 262-amino-acid polypeptide reads, in one-letter code: Zinc import ATP-binding protein ZnuC (262 aa).

The region spanning 5-220 (IELQDICVDF…PSYLAMFGHR (216 aa)) is the ABC transporter domain. 37-44 (GPNGAGKS) lines the ATP pocket.

It belongs to the ABC transporter superfamily. Zinc importer (TC 3.A.1.15.5) family. In terms of assembly, the complex is composed of two ATP-binding proteins (ZnuC), two transmembrane proteins (ZnuB) and a solute-binding protein (ZnuA).

Its subcellular location is the cell inner membrane. It carries out the reaction Zn(2+)(out) + ATP(in) + H2O(in) = Zn(2+)(in) + ADP(in) + phosphate(in) + H(+)(in). Functionally, part of the ABC transporter complex ZnuABC involved in zinc import. Responsible for energy coupling to the transport system. This is Zinc import ATP-binding protein ZnuC from Vibrio cholerae serotype O1 (strain ATCC 39315 / El Tor Inaba N16961).